A 297-amino-acid polypeptide reads, in one-letter code: Phosphatidylglycerol--prolipoprotein diacylglyceryl transferase (297 aa).

The next 4 membrane-spanning stretches (helical) occupy residues 20-40 (FITIRWYGLLISVSVLIGLFI), 57-77 (EILPSLIIFSIIGARAYYVIF), 107-127 (WEGGIAIHGGLIGGLISIIFF), and 133-153 (IHLKTFIDILIPSIILGQSIG). Arginine 154 provides a ligand contact to a 1,2-diacyl-sn-glycero-3-phospho-(1'-sn-glycerol). The next 3 helical transmembrane spans lie at 193 to 213 (PTFLYESLWNLLVFIFLILIF), 225 to 245 (GFISCLYLICYSFGRFWIEGL), and 266 to 286 (AQFISIFLFSSGLIGIFFLRL).

It belongs to the Lgt family.

Its subcellular location is the cell inner membrane. The enzyme catalyses L-cysteinyl-[prolipoprotein] + a 1,2-diacyl-sn-glycero-3-phospho-(1'-sn-glycerol) = an S-1,2-diacyl-sn-glyceryl-L-cysteinyl-[prolipoprotein] + sn-glycerol 1-phosphate + H(+). It participates in protein modification; lipoprotein biosynthesis (diacylglyceryl transfer). Catalyzes the transfer of the diacylglyceryl group from phosphatidylglycerol to the sulfhydryl group of the N-terminal cysteine of a prolipoprotein, the first step in the formation of mature lipoproteins. In Prochlorococcus marinus (strain MIT 9301), this protein is Phosphatidylglycerol--prolipoprotein diacylglyceryl transferase.